Here is a 126-residue protein sequence, read N- to C-terminus: Hydrogenase maturation factor HypA (126 aa).

Residue H2 coordinates Ni(2+). Positions 78, 81, 97, and 100 each coordinate Zn(2+).

The protein belongs to the HypA/HybF family.

Involved in the maturation of [NiFe] hydrogenases. Required for nickel insertion into the metal center of the hydrogenase. In Methanococcus maripaludis (strain C5 / ATCC BAA-1333), this protein is Hydrogenase maturation factor HypA.